Consider the following 658-residue polypeptide: Biosynthetic arginine decarboxylase (658 aa).

Position 127 is an N6-(pyridoxal phosphate)lysine (Lys-127). Phe-307–Tyr-317 serves as a coordination point for substrate.

This sequence belongs to the Orn/Lys/Arg decarboxylase class-II family. SpeA subfamily. In terms of assembly, homotetramer. Pyridoxal 5'-phosphate serves as cofactor. The cofactor is Mg(2+). Post-translationally, processed post-translationally to a 70 kDa mature form. The N-terminus is blocked.

Its subcellular location is the periplasm. It carries out the reaction L-arginine + H(+) = agmatine + CO2. It participates in amine and polyamine biosynthesis; agmatine biosynthesis; agmatine from L-arginine: step 1/1. Down-regulated by polyamine end products putrescine and spermidine. Catalyzes the biosynthesis of agmatine from arginine. This Escherichia coli (strain K12) protein is Biosynthetic arginine decarboxylase (speA).